Reading from the N-terminus, the 29-residue chain is Trypsin inhibitor 1 (29 aa).

3 disulfides stabilise this stretch: cysteine 3–cysteine 20, cysteine 10–cysteine 22, and cysteine 16–cysteine 28.

Belongs to the protease inhibitor I7 (squash-type serine protease inhibitor) family.

It is found in the secreted. In terms of biological role, inhibits trypsin. The chain is Trypsin inhibitor 1 from Luffa aegyptiaca (Sponge gourd).